A 146-amino-acid polypeptide reads, in one-letter code: Leptin (146 aa).

Residues C96 and C146 are joined by a disulfide bond.

This sequence belongs to the leptin family.

It is found in the secreted. Its function is as follows. Key player in the regulation of energy balance and body weight control. Once released into the circulation, has central and peripheral effects by binding LEPR, found in many tissues, which results in the activation of several major signaling pathways. In the hypothalamus, acts as an appetite-regulating factor that induces a decrease in food intake and an increase in energy consumption by inducing anorexinogenic factors and suppressing orexigenic neuropeptides, also regulates bone mass and secretion of hypothalamo-pituitary-adrenal hormones. In the periphery, increases basal metabolism, influences reproductive function, regulates pancreatic beta-cell function and insulin secretion, is pro-angiogenic for endothelial cell and affects innate and adaptive immunity. In the arcuate nucleus of the hypothalamus, activates by depolarization POMC neurons inducing FOS and SOCS3 expression to release anorexigenic peptides and inhibits by hyperpolarization NPY neurons inducing SOCS3 with a consequent reduction on release of orexigenic peptides. In addition to its known satiety inducing effect, has a modulatory role in nutrient absorption. In the intestine, reduces glucose absorption by enterocytes by activating PKC and leading to a sequential activation of p38, PI3K and ERK signaling pathways which exerts an inhibitory effect on glucose absorption. Acts as a growth factor on certain tissues, through the activation of different signaling pathways increases expression of genes involved in cell cycle regulation such as CCND1, via JAK2-STAT3 pathway, or VEGFA, via MAPK1/3 and PI3K-AKT1 pathways. May also play an apoptotic role via JAK2-STAT3 pathway and up-regulation of BIRC5 expression. Pro-angiogenic, has mitogenic activity on vascular endothelial cells and plays a role in matrix remodeling by regulating the expression of matrix metalloproteinases (MMPs) and tissue inhibitors of metalloproteinases (TIMPs). In innate immunity, modulates the activity and function of neutrophils by increasing chemotaxis and the secretion of oxygen radicals. Increases phagocytosis by macrophages and enhances secretion of pro-inflammatory mediators. Increases cytotoxic ability of NK cells. Plays a pro-inflammatory role, in synergy with IL1B, by inducing NOS2 which promotes the production of IL6, IL8 and Prostaglandin E2, through a signaling pathway that involves JAK2, PI3K, MAP2K1/MEK1 and MAPK14/p38. In adaptive immunity, promotes the switch of memory T-cells towards T helper-1 cell immune responses. Increases CD4(+)CD25(-) T-cell proliferation and reduces autophagy during TCR (T-cell receptor) stimulation, through MTOR signaling pathway activation and BCL2 up-regulation. In Pan troglodytes (Chimpanzee), this protein is Leptin (LEP).